An 87-amino-acid polypeptide reads, in one-letter code: Sec-independent protein translocase protein TatA (87 aa).

A helical membrane pass occupies residues 1–21 (MGSFSIWHWLIVLLIVVMVFG). The interval 40-87 (KDGMKDGSTPEGTPASTTAATPPAGQVTNQQAHAADPGTIDVEAKHKG) is disordered. A compositionally biased stretch (low complexity) spans 46–64 (GSTPEGTPASTTAATPPAG).

It belongs to the TatA/E family. In terms of assembly, the Tat system comprises two distinct complexes: a TatABC complex, containing multiple copies of TatA, TatB and TatC subunits, and a separate TatA complex, containing only TatA subunits. Substrates initially bind to the TatABC complex, which probably triggers association of the separate TatA complex to form the active translocon.

It is found in the cell inner membrane. Functionally, part of the twin-arginine translocation (Tat) system that transports large folded proteins containing a characteristic twin-arginine motif in their signal peptide across membranes. TatA could form the protein-conducting channel of the Tat system. The sequence is that of Sec-independent protein translocase protein TatA from Paracidovorax citrulli (strain AAC00-1) (Acidovorax citrulli).